Here is a 388-residue protein sequence, read N- to C-terminus: Succinate--CoA ligase [ADP-forming] subunit beta (388 aa).

One can recognise an ATP-grasp domain in the interval 9-244 (KEILRQAGVP…LDEEDPAEVE (236 aa)). Residues Lys-46, 53-55 (GRG), Glu-99, Ala-102, and Glu-107 contribute to the ATP site. Mg(2+) contacts are provided by Asn-199 and Asp-213. Residues Asn-264 and 321–323 (GIM) contribute to the substrate site.

Belongs to the succinate/malate CoA ligase beta subunit family. In terms of assembly, heterotetramer of two alpha and two beta subunits. Mg(2+) serves as cofactor.

The enzyme catalyses succinate + ATP + CoA = succinyl-CoA + ADP + phosphate. The catalysed reaction is GTP + succinate + CoA = succinyl-CoA + GDP + phosphate. Its pathway is carbohydrate metabolism; tricarboxylic acid cycle; succinate from succinyl-CoA (ligase route): step 1/1. Functionally, succinyl-CoA synthetase functions in the citric acid cycle (TCA), coupling the hydrolysis of succinyl-CoA to the synthesis of either ATP or GTP and thus represents the only step of substrate-level phosphorylation in the TCA. The beta subunit provides nucleotide specificity of the enzyme and binds the substrate succinate, while the binding sites for coenzyme A and phosphate are found in the alpha subunit. The chain is Succinate--CoA ligase [ADP-forming] subunit beta from Albidiferax ferrireducens (strain ATCC BAA-621 / DSM 15236 / T118) (Rhodoferax ferrireducens).